The primary structure comprises 340 residues: tRNA N6-adenosine threonylcarbamoyltransferase (340 aa).

Residues His-113 and His-117 each coordinate Fe cation. Substrate contacts are provided by residues 135 to 139, Asp-169, Gly-182, Asp-186, and Asn-274; that span reads LVSGG. Asp-302 lines the Fe cation pocket.

Belongs to the KAE1 / TsaD family. It depends on Fe(2+) as a cofactor.

It localises to the cytoplasm. It carries out the reaction L-threonylcarbamoyladenylate + adenosine(37) in tRNA = N(6)-L-threonylcarbamoyladenosine(37) in tRNA + AMP + H(+). In terms of biological role, required for the formation of a threonylcarbamoyl group on adenosine at position 37 (t(6)A37) in tRNAs that read codons beginning with adenine. Is involved in the transfer of the threonylcarbamoyl moiety of threonylcarbamoyl-AMP (TC-AMP) to the N6 group of A37, together with TsaE and TsaB. TsaD likely plays a direct catalytic role in this reaction. This chain is tRNA N6-adenosine threonylcarbamoyltransferase, found in Mycolicibacterium vanbaalenii (strain DSM 7251 / JCM 13017 / BCRC 16820 / KCTC 9966 / NRRL B-24157 / PYR-1) (Mycobacterium vanbaalenii).